A 219-amino-acid chain; its full sequence is MTESHIDFRRAKFLISAPDIAHLDQYLPGDVGVEIAFAGRSNAGKSSALNALTEQKSLARTSKTPGRTQLINVFELDSQRRLVDLPGYGFAQVPLAMKNKWQQALGEYLQKRACLSGVVVLMDIRHPLKDLDMQMIQWAVASEIPVLALLTKSDKLAQSAKMKTVNEVRKALADFGDWVLVEPFSALKGTGKPKVLSILNEWCHPQWLRDELDTAEQSN.

One can recognise an EngB-type G domain in the interval 31-205 (VGVEIAFAGR…LSILNEWCHP (175 aa)). Residues 39–46 (GRSNAGKS), 66–70 (GRTQL), 84–87 (DLPG), 151–154 (TKSD), and 184–186 (FSA) contribute to the GTP site. Mg(2+) contacts are provided by Ser-46 and Thr-68.

It belongs to the TRAFAC class TrmE-Era-EngA-EngB-Septin-like GTPase superfamily. EngB GTPase family. It depends on Mg(2+) as a cofactor.

In terms of biological role, necessary for normal cell division and for the maintenance of normal septation. The chain is Probable GTP-binding protein EngB from Shewanella sp. (strain W3-18-1).